A 116-amino-acid chain; its full sequence is Large ribosomal subunit protein bL20 (116 aa).

Belongs to the bacterial ribosomal protein bL20 family.

Functionally, binds directly to 23S ribosomal RNA and is necessary for the in vitro assembly process of the 50S ribosomal subunit. It is not involved in the protein synthesizing functions of that subunit. The chain is Large ribosomal subunit protein bL20 from Phocaeicola vulgatus (strain ATCC 8482 / DSM 1447 / JCM 5826 / CCUG 4940 / NBRC 14291 / NCTC 11154) (Bacteroides vulgatus).